We begin with the raw amino-acid sequence, 202 residues long: dITP/XTP pyrophosphatase (202 aa).

9–14 (TGNKGK) lines the substrate pocket. The active-site Proton acceptor is aspartate 73. Residue aspartate 73 participates in Mg(2+) binding. Residues serine 74, 158 to 161 (FGYD), lysine 181, and 186 to 187 (HR) contribute to the substrate site.

Belongs to the HAM1 NTPase family. In terms of assembly, homodimer. The cofactor is Mg(2+).

The enzyme catalyses XTP + H2O = XMP + diphosphate + H(+). The catalysed reaction is dITP + H2O = dIMP + diphosphate + H(+). It carries out the reaction ITP + H2O = IMP + diphosphate + H(+). Pyrophosphatase that catalyzes the hydrolysis of nucleoside triphosphates to their monophosphate derivatives, with a high preference for the non-canonical purine nucleotides XTP (xanthosine triphosphate), dITP (deoxyinosine triphosphate) and ITP. Seems to function as a house-cleaning enzyme that removes non-canonical purine nucleotides from the nucleotide pool, thus preventing their incorporation into DNA/RNA and avoiding chromosomal lesions. This chain is dITP/XTP pyrophosphatase, found in Lactobacillus acidophilus (strain ATCC 700396 / NCK56 / N2 / NCFM).